A 299-amino-acid chain; its full sequence is MTDNTRLRIAMQKSGRLSDDSRELLARCGIKINLHTQRLIAMAENMPIDILRVRDDDIPGLVMDGVVDLGIIGENVLEEELLNRRAQGEDPRYFTLRRLDFGGCRLSLATPVDDAWDGPLSLNGKRIATSYPHLLKRYLDQKGISFKSCLLNGSVEVAPRAGLADAICDLVSTGATLEANGLREVEVIYRSKACLIQRDGEMEESKQQLIDKLLTRIQGVIQARESKYIMMHAPTQRLDEVIALLPGAERPTILPLAGDQQRVAMHMVSSETLFWETMEKLKALGASSILVLPIEKMME.

Belongs to the ATP phosphoribosyltransferase family. Long subfamily. In terms of assembly, equilibrium between an active dimeric form, an inactive hexameric form and higher aggregates. Interconversion between the various forms is largely reversible and is influenced by the natural substrates and inhibitors of the enzyme. Mg(2+) serves as cofactor.

It is found in the cytoplasm. The catalysed reaction is 1-(5-phospho-beta-D-ribosyl)-ATP + diphosphate = 5-phospho-alpha-D-ribose 1-diphosphate + ATP. The protein operates within amino-acid biosynthesis; L-histidine biosynthesis; L-histidine from 5-phospho-alpha-D-ribose 1-diphosphate: step 1/9. With respect to regulation, feedback inhibited by histidine. Functionally, catalyzes the condensation of ATP and 5-phosphoribose 1-diphosphate to form N'-(5'-phosphoribosyl)-ATP (PR-ATP). Has a crucial role in the pathway because the rate of histidine biosynthesis seems to be controlled primarily by regulation of HisG enzymatic activity. The protein is ATP phosphoribosyltransferase of Escherichia coli O157:H7.